Here is a 245-residue protein sequence, read N- to C-terminus: Adenosylcobinamide-GDP ribazoletransferase (245 aa).

Helical transmembrane passes span 31-51, 61-81, 113-133, 138-158, and 192-212; these read FGRA…VLYA, PLLQ…ALHL, VAVV…AALL, AGLL…LFLT, and LAFG…FAWL.

Belongs to the CobS family. The cofactor is Mg(2+).

It localises to the cell inner membrane. The enzyme catalyses alpha-ribazole + adenosylcob(III)inamide-GDP = adenosylcob(III)alamin + GMP + H(+). It carries out the reaction alpha-ribazole 5'-phosphate + adenosylcob(III)inamide-GDP = adenosylcob(III)alamin 5'-phosphate + GMP + H(+). The protein operates within cofactor biosynthesis; adenosylcobalamin biosynthesis; adenosylcobalamin from cob(II)yrinate a,c-diamide: step 7/7. Functionally, joins adenosylcobinamide-GDP and alpha-ribazole to generate adenosylcobalamin (Ado-cobalamin). Also synthesizes adenosylcobalamin 5'-phosphate from adenosylcobinamide-GDP and alpha-ribazole 5'-phosphate. The polypeptide is Adenosylcobinamide-GDP ribazoletransferase (Pseudomonas aeruginosa (strain ATCC 15692 / DSM 22644 / CIP 104116 / JCM 14847 / LMG 12228 / 1C / PRS 101 / PAO1)).